The sequence spans 172 residues: Probable chorismate pyruvate-lyase (172 aa).

4 residues coordinate substrate: M37, R79, L117, and E158.

The protein belongs to the UbiC family.

The protein resides in the cytoplasm. It carries out the reaction chorismate = 4-hydroxybenzoate + pyruvate. It participates in cofactor biosynthesis; ubiquinone biosynthesis. Its function is as follows. Removes the pyruvyl group from chorismate, with concomitant aromatization of the ring, to provide 4-hydroxybenzoate (4HB) for the ubiquinone pathway. The polypeptide is Probable chorismate pyruvate-lyase (Bartonella quintana (strain Toulouse) (Rochalimaea quintana)).